The primary structure comprises 108 residues: UPF0060 membrane protein sll0793 (108 aa).

The next 4 membrane-spanning stretches (helical) occupy residues Leu-7–Ile-27, Ser-32–Leu-52, Tyr-64–Val-84, and Arg-86–Asn-106.

It belongs to the UPF0060 family.

The protein resides in the cell inner membrane. This is UPF0060 membrane protein sll0793 from Synechocystis sp. (strain ATCC 27184 / PCC 6803 / Kazusa).